Here is a 542-residue protein sequence, read N- to C-terminus: Chaperonin GroEL 4 (542 aa).

ATP is bound by residues 30-33 (TLGP), Lys51, 87-91 (DGTTT), Gly415, and Asp496.

Belongs to the chaperonin (HSP60) family. Forms a cylinder of 14 subunits composed of two heptameric rings stacked back-to-back. Interacts with the co-chaperonin GroES.

It is found in the cytoplasm. The enzyme catalyses ATP + H2O + a folded polypeptide = ADP + phosphate + an unfolded polypeptide.. In terms of biological role, together with its co-chaperonin GroES, plays an essential role in assisting protein folding. The GroEL-GroES system forms a nano-cage that allows encapsulation of the non-native substrate proteins and provides a physical environment optimized to promote and accelerate protein folding. This chain is Chaperonin GroEL 4, found in Rhizobium etli (strain ATCC 51251 / DSM 11541 / JCM 21823 / NBRC 15573 / CFN 42).